The following is a 1067-amino-acid chain: MAAEGGRCQKSYFDVLGICCPSEVPLVEKLLQPLEGVQKVTVIVPSRTVIVVHDVDAISQSQIVKALNQARLEASVRAYGNGSEKITNKWPSPYVLLCGLLLVVSLFEHFWHPLKWFALVAAAAGLPPIVLRSIAAIRRLTLDVNILMLIAVAGAIALKDYSEAGFIVFLFTTAEWLETRASHKATAGMSALMSMAPQKAILAETGEVVAARDVKVNTVIAVKAGEVIPIDGVVVDGRSEVDESTLTGESFPVSKQPDSQVWAGTLNIDGYIAVRTTAMADNSAVAKMARLVEEAQNSRSSTQRLIDTCAKYYTPAVVVMAGSVAAIPAIAKAHNLKHWFQLALVLLVSACPCALVLSTPIATFCALLRAARTGLLIKGGDVLESLASIKVAAFDKTGTITRGEFSVEEFQPVGERVSLQQLLYWVSSVESRSSHPMASVLVDYAQSKSVEPKSENVSEFQIYPGEGIYGEIDGAGIYIGNKRILSRASCETVPDMKDMKGVTIGYVACNNELIGVFTLSDACRTGSAEAIKELRSLGIKSVMLTGDSSAAATYAQNQLGNILAEVHAELLPEDKVRIVGELKEKDGPTLMVGDGMNDAPALAKADVGVSMGVSGSAVAMETSHVALMSNDIRRIPKAVRLARRTHRTIIVNIIFSVITKLAIVGLAFAGHPLIWAAVLADVGTCLLVIMYSMLLLREKDSRKAKKCAASHHGSPKKCCSSSHHGSHAKKNHGVSHHCSDGPCKSMVSCKESSVAKNACHDHHHEHNHHEEPAHKHSSNQHGCHDHSHGHSNCKEPSNQLITNKHACHDGHNHCADTSNLHDTKKHDCHGHEHSTCKEELNALPPTNDHACHGHEHSHCEEPVALHSTGEHACHEHEHEHIHCDEPIGSHCADKHACHDHEQVHEHHCCDEQQTPHTADLHPCHDHDHDNLEVEEVKDCHAEPPHHHNHCCHEPHDQVKNDTHPVQEHSISIEESSDHHEHHHNEEHKAEDCGHHPKPKDCAPPPTDCISRNCCSNTSKGKDICSSLHRDHHTSQASRCCRSYVKCSRPSRSCCSHSIVKLPEIVVE.

Residues 9-75 (QKSYFDVLGI…ALNQARLEAS (67 aa)) form the HMA domain. The next 8 helical transmembrane spans lie at 94 to 114 (YVLL…WHPL), 117 to 137 (FALV…IAAI), 140 to 160 (LTLD…ALKD), 162 to 182 (SEAG…TRAS), 313 to 333 (YTPA…IAKA), 342 to 362 (LALV…TPIA), 649 to 669 (IIVN…LAFA), and 673 to 693 (LIWA…MYSM). 3 disordered regions span residues 711–739 (HHGS…HHCS), 760–790 (HDHH…SHGH), and 960–996 (NDTH…GHHP). Residues 724–735 (HGSHAKKNHGVS) are compositionally biased toward basic residues. Basic and acidic residues-rich tracts occupy residues 760–774 (HDHH…EPAH) and 975–996 (SSDH…GHHP).

This sequence belongs to the cation transport ATPase (P-type) (TC 3.A.3) family. Type IB subfamily. In roots, localizes at the pericycle cells. In nodes, localizes in the phloem parenchyma and companion cells of both enlarged and diffuse vascular bundles.

The protein localises to the cell membrane. The enzyme catalyses Zn(2+)(in) + ATP + H2O = Zn(2+)(out) + ADP + phosphate + H(+). It carries out the reaction Cd(2+)(in) + ATP + H2O = Cd(2+)(out) + ADP + phosphate + H(+). In terms of biological role, zinc/cadmium transporter that plays an essential role in promoting translocation of zinc and cadmium from roots to shoots. May control cadmium loading into xylem. In roots, transports zinc and cadmium from the apoplast to the symplast to facilitate translocation via the phloem. In nodes, functions to load zinc and cadmium to the phloem for the preferential distribution to the upper nodes and panicles. In Oryza sativa subsp. japonica (Rice), this protein is Cadmium/zinc-transporting ATPase HMA2.